The chain runs to 195 residues: Capsid protein (195 aa).

The disordered stretch occupies residues Asn148–Cys195. The segment covering Val161–Ser188 has biased composition (basic residues). 3 positions are modified to phosphoserine; by host: Ser167, Ser174, and Ser182. The 1; half-length repeat unit spans residues Ser167–Thr172. A 3 X 7 AA repeats of S-P-R-R-R-[PR]-S region spans residues Ser167–Ser188. Positions Arg170–Arg187 match the Bipartite nuclear localization signal motif. Repeat copies occupy residues Ser174–Ser180 and Ser182–Ser188. The RNA binding stretch occupies residues Gln189–Cys195.

Belongs to the orthohepadnavirus core antigen family. Homodimerizes, then multimerizes. Interacts with cytosol exposed regions of viral L glycoprotein present in the reticulum-to-Golgi compartment. Interacts with human FLNB. Phosphorylated form interacts with host importin alpha; this interaction depends on the exposure of the NLS, which itself depends upon genome maturation and/or phosphorylation of the capsid protein. Interacts with host NUP153. Post-translationally, phosphorylated by host SRPK1, SRPK2, and maybe protein kinase C or GAPDH. Phosphorylation is critical for pregenomic RNA packaging. Protein kinase C phosphorylation is stimulated by HBx protein and may play a role in transport of the viral genome to the nucleus at the late step during the viral replication cycle.

The protein resides in the virion. The protein localises to the host cytoplasm. Its function is as follows. Self assembles to form an icosahedral capsid. Most capsids appear to be large particles with an icosahedral symmetry of T=4 and consist of 240 copies of capsid protein, though a fraction forms smaller T=3 particles consisting of 180 capsid proteins. Entering capsids are transported along microtubules to the nucleus. Phosphorylation of the capsid is thought to induce exposure of nuclear localization signal in the C-terminal portion of the capsid protein that allows binding to the nuclear pore complex via the importin (karyopherin-) alpha and beta. Capsids are imported in intact form through the nuclear pore into the nuclear basket, where it probably binds NUP153. Only capsids that contain the mature viral genome can release the viral DNA and capsid protein into the nucleoplasm. Immature capsids get stuck in the basket. Capsids encapsulate the pre-genomic RNA and the P protein. Pre-genomic RNA is reverse-transcribed into DNA while the capsid is still in the cytoplasm. The capsid can then either be directed to the nucleus, providing more genomes for transcription, or bud through the endoplasmic reticulum to provide new virions. This chain is Capsid protein, found in Homo sapiens (Human).